The chain runs to 638 residues: Guanylate-binding protein 7 (638 aa).

The interval 1 to 310 (MASEIHMPGP…DAINSGATPC (310 aa)) is GTPase domain (Globular). Positions 35–277 (TQPVVVVAIV…FCSYIFTHAK (243 aa)) constitute a GB1/RHD3-type G domain. GTP is bound by residues 45-52 (GLYRTGKS), 67-69 (LGC), and 97-101 (DTEGL). The interaction with the CYBA-CYBB complex stretch occupies residues 311–638 (LENAMAVLAQ…LRNPGKKIIS (328 aa)). Positions 590–638 (PSVFSQILDVAGSIFIAALPGAAKLVDLGMKILSSLCNRLRNPGKKIIS) are C-terminal tail; required for its localization to cytoplasmic vesicle.

Belongs to the TRAFAC class dynamin-like GTPase superfamily. GB1/RHD3 GTPase family. GB1 subfamily. As to quaternary structure, monomer and dimer. Interacts with CYBA, CYBA-CYBB complex and ATG4B. Interacts (via GB1/RHD3-type G domain) with NCF2 and NCF2-NCF4 complex.

It is found in the cytoplasmic vesicle membrane. The enzyme catalyses GTP + H2O = GDP + phosphate + H(+). It catalyses the reaction GDP + H2O = GMP + phosphate + H(+). Functionally, interferon (IFN)-inducible GTPase that plays important roles in innate immunity against a diverse range of bacterial, viral and protozoan pathogens. Hydrolyzes GTP to GMP in two consecutive cleavage reactions and predominantly uses GTP and not GDP or GMP as the substrate. Following infection, recruited to the pathogen-containing vacuoles or vacuole-escaped bacteria and acts as a positive regulator of inflammasome assembly by promoting the release of inflammasome ligands from bacteria. Acts by promoting lysis of pathogen-containing vacuoles, releasing pathogens into the cytosol. Following pathogen release in the cytosol, promotes recruitment of proteins that mediate bacterial cytolysis: this liberates ligands that are detected by inflammasomes, such as lipopolysaccharide (LPS) that activates the non-canonical CASP4/CASP11 inflammasome or double-stranded DNA (dsDNA) that activates the AIM2 inflammasome. Also promotes IFN-gamma-mediated host defense against bacterial infections by regulating oxidative responses and bacteriolytic peptide generation. May help to assemble NADPH oxidase on phagosomal membranes by acting as a bridging protein between NADPH oxidase cytosolic subunits NCF2-NCF4 and the membrane subunits CYBA-CYBB. Participates along with GBP1 in trafficking monoubiquinated protein cargo to autolysosomes for generating ubiquitin-derived antimicrobial peptides. Facilitates influenza A virus replication by inhibiting the activation of NF-kappaB and JAK-STAT signaling pathways and the expression of type I, type III interferons and pro-inflammatory cytokines. Confers protection to several pathogens, including the bacterial pathogens Listeria monocytogenes and Mycobacterium bovis BCG as well as the protozoan pathogen Toxoplasma gondii. Required for disruption of the parasitophorous vacuole formed following T.gondii infection and subsequent killing of the parasite. This is Guanylate-binding protein 7 (GBP7) from Homo sapiens (Human).